A 1195-amino-acid polypeptide reads, in one-letter code: MTVMSLSRDLKDDFHSDTVLSILNEQRIRGILCDVTIIVEDTKFKAHSNVLAASSLYFKNIFWSHTICISSHVLELDDLKAEVFTEILNYIYSSTVVVKRQETVTDLAAAGKKLGISFLEDLTDRNFSNSPGPYVFCITEKGVVKEEKNEKRHEEPAITNGPRITNAFSIIETENSNNMFSPLDLRASFKKVSDSMRTASLCLERTDVCHEAEPVRTLAEHSYAVSSVAEAYRSQPVREHDGSSPGNTGKENCEALAAKPKTCRKPKTFSIPQDSDSATENIPPPPVSNLEVNQERSPQPAAVLTRSKSPNNEGDVHFSREDENQSSDVPGPPAAEVPPLVYNCSCCSKAFDSSTLLSAHMQLHKPTQEPLVCKYCNKQFTTLNRLDRHEQICMRSSHMPIPGGNQRFLENYPTIGQNGGSFTGPEPLLSENRIGEFSSTGSTLPDTDHMVKFVNGQMLYSCVVCKRSYVTLSSLRRHANVHSWRRTYPCHYCNKVFALAEYRTRHEIWHTGERRYQCIFCLETFMTYYILKNHQKSFHAIDHRLSISKKTANGGLKPSVYPYKLYRLLPMKCKRAPYKSYRNSSYENARENSQMNESAPGTYVVQNPHSSELPTLNFQDTVNTLTNSPAIPLETSACQDIPTSANVQNAEGTKWGEEALKMDLDNNFYSTEVSVSSTENAVSSDLRAGDVPVLSLSNSSENAASVISYSGSAPSVIVHSSQFSSVIMHSNAIAAMTSSNHRAFSDPAVSQSLKDDSKPEPDKVGRFASRPKSIKEKKKTTSHTRGEIPEESNYVADPGGSLSKTTNIAEETSKIETYIAKPALPGTSTNSNVAPLCQITVKIGNEAIVKRHILGSKLFYKRGRRPKYQMQEEPLPQGNDPEPSGDSPLGLCQSECMEMSEVFDDASDQDSTDKPWRPYYNYKPKKKSRQLKKMRKVNWRKEHGNRSPSHKCKYPAELDCAVGKAPQDKPFEEEETKEMPKLQCELCDGDKAVGAGNQGRPHRHLTSRPYACELCAKQFQSPSTLKMHMRCHTGEKPYQCKTCGRCFSVQGNLQKHERIHLGLKEFVCQYCNKAFTLNETLKIHERIHTGEKRYHCQFCFQRFLYLSTKRNHEQRHIREHNGKGYACFQCPKICKTAAALGMHQKKHLFKSPSQQEKIGDVCHENSNPLENQHFIGSEDNDQKDNIQTGVENVVL.

Residues 33 to 100 (CDVTIIVEDT…IYSSTVVVKR (68 aa)) form the BTB domain. Lysine 43 participates in a covalent cross-link: Glycyl lysine isopeptide (Lys-Gly) (interchain with G-Cter in SUMO2). Serine 130 carries the phosphoserine modification. Residues lysine 145, lysine 148, lysine 151, and lysine 259 each participate in a glycyl lysine isopeptide (Lys-Gly) (interchain with G-Cter in SUMO2) cross-link. The disordered stretch occupies residues 264-334 (RKPKTFSIPQ…QSSDVPGPPA (71 aa)). Residues 270 to 280 (SIPQDSDSATE) are compositionally biased toward polar residues. The tract at residues 300-523 (PAAVLTRSKS…RRYQCIFCLE (224 aa)) is interaction with CBFA2T3. Serine 309 carries the phosphoserine modification. Positions 314 to 323 (GDVHFSREDE) are enriched in basic and acidic residues. A C2H2-type 1 zinc finger spans residues 342–364 (YNCSCCSKAFDSSTLLSAHMQLH). A C2H2-type 2; degenerate zinc finger spans residues 371–395 (LVCKYCNKQFTTLNRLDRHEQICMR). C2H2-type zinc fingers lie at residues 460-482 (YSCV…ANVH), 488-510 (YPCH…EIWH), and 516-539 (YQCI…KSFH). Glycyl lysine isopeptide (Lys-Gly) (interchain with G-Cter in SUMO2) cross-links involve residues lysine 550, lysine 557, lysine 754, lysine 758, lysine 763, lysine 804, lysine 814, lysine 821, lysine 842, lysine 850, and lysine 857. The segment at 745 to 804 (SDPAVSQSLKDDSKPEPDKVGRFASRPKSIKEKKKTTSHTRGEIPEESNYVADPGGSLSK) is disordered. Over residues 753 to 765 (LKDDSKPEPDKVG) the composition is skewed to basic and acidic residues. Disordered regions lie at residues 871 to 891 (QEEP…PLGL) and 903 to 922 (FDDA…YYNY). Residues lysine 923, lysine 964, lysine 969, lysine 977, lysine 981, lysine 991, lysine 1017, and lysine 1026 each participate in a glycyl lysine isopeptide (Lys-Gly) (interchain with G-Cter in SUMO2) cross-link. 5 C2H2-type zinc fingers span residues 1010–1032 (YACE…MRCH), 1038–1060 (YQCK…ERIH), 1066–1088 (FVCQ…ERIH), 1094–1116 (YHCQ…EQRH), and 1125–1147 (YACF…QKKH). Residues lysine 1109, lysine 1132, lysine 1135, lysine 1150, and lysine 1183 each participate in a glycyl lysine isopeptide (Lys-Gly) (interchain with G-Cter in SUMO2) cross-link.

Interacts with CBFA2T3. Interacts with ZBTB4. Interacts with RBBP6. Post-translationally, ubiquitinated by RBBP6; leading to its degradation by the proteasome.

The protein localises to the nucleus. It localises to the chromosome. In terms of biological role, transcriptional regulator with bimodal DNA-binding specificity. Binds with a higher affinity to methylated CpG dinucleotides in the consensus sequence 5'-CGCG-3' but can also bind to E-box elements (5'-CACGTG-3'). Can also bind specifically to a single methyl-CpG pair. Represses transcription in a methyl-CpG-dependent manner. Plays an important role in regulating DNA replication and common fragile sites (CFS) stability in a RBBP6- and MCM10-dependent manner; represses expression of MCM10 which plays an important role in DNA-replication. Acts as a transcriptional activator. May be involved in the differentiation and/or survival of late postmitotic neurons. This is Zinc finger and BTB domain-containing protein 38 from Homo sapiens (Human).